The primary structure comprises 434 residues: Glutamate-1-semialdehyde 2,1-aminomutase (434 aa).

N6-(pyridoxal phosphate)lysine is present on lysine 267.

Belongs to the class-III pyridoxal-phosphate-dependent aminotransferase family. HemL subfamily. In terms of assembly, homodimer. It depends on pyridoxal 5'-phosphate as a cofactor.

It is found in the cytoplasm. The catalysed reaction is (S)-4-amino-5-oxopentanoate = 5-aminolevulinate. It functions in the pathway porphyrin-containing compound metabolism; protoporphyrin-IX biosynthesis; 5-aminolevulinate from L-glutamyl-tRNA(Glu): step 2/2. The protein operates within porphyrin-containing compound metabolism; chlorophyll biosynthesis. In Roseiflexus castenholzii (strain DSM 13941 / HLO8), this protein is Glutamate-1-semialdehyde 2,1-aminomutase.